Consider the following 290-residue polypeptide: Ribosomal RNA small subunit methyltransferase A (290 aa).

S-adenosyl-L-methionine is bound by residues H37, V39, G64, E85, D115, and N132.

The protein belongs to the class I-like SAM-binding methyltransferase superfamily. rRNA adenine N(6)-methyltransferase family. RsmA subfamily.

Its subcellular location is the cytoplasm. The catalysed reaction is adenosine(1518)/adenosine(1519) in 16S rRNA + 4 S-adenosyl-L-methionine = N(6)-dimethyladenosine(1518)/N(6)-dimethyladenosine(1519) in 16S rRNA + 4 S-adenosyl-L-homocysteine + 4 H(+). Its function is as follows. Specifically dimethylates two adjacent adenosines (A1518 and A1519) in the loop of a conserved hairpin near the 3'-end of 16S rRNA in the 30S particle. May play a critical role in biogenesis of 30S subunits. This Acidothermus cellulolyticus (strain ATCC 43068 / DSM 8971 / 11B) protein is Ribosomal RNA small subunit methyltransferase A.